The sequence spans 154 residues: Egg-lysin (154 aa).

The signal sequence occupies residues 1–18 (MKLLVLCIFAMMATLAMS).

In terms of assembly, homodimer. As to expression, sperm.

Dissolves the egg vitelline layer nonenzymatically during fertilization. It creates a hole of about 3 mu-m in diameter through which the sperm pass. This is Egg-lysin from Haliotis sorenseni (White abalone).